Here is a 242-residue protein sequence, read N- to C-terminus: MMMDLFETGSYFFYLDGENVTLQPLEVAEGSPLYPGSDGTLSPCQDQMPPEAGSDSSGEEHVLAPPGLQPPHCPGQCLIWACKTCKRKSAPTDRRKAATLRERRRLKKINEAFEALKRRTVANPNQRLPKVEILRSAISYIERLQDLLHRLDQQEKMQELGVDPFSYRPKQENLEGADFLRTCSSQWPSVSDHSRGLVITAKEGGASIDSSASSSLRCLSSIVDSISSEERKLPCVEEVVEK.

A disordered region spans residues 31 to 63 (SPLYPGSDGTLSPCQDQMPPEAGSDSSGEEHVL). One can recognise a bHLH domain in the interval 93–144 (DRRKAATLRERRRLKKINEAFEALKRRTVANPNQRLPKVEILRSAISYIERL).

In terms of assembly, efficient DNA binding requires dimerization with another bHLH protein. Interacts with CSRP3. In terms of tissue distribution, skeletal muscle.

The protein localises to the nucleus. Functionally, involved in muscle differentiation (myogenic factor). Induces fibroblasts to differentiate into myoblasts. Probable sequence specific DNA-binding protein. The polypeptide is Myogenic factor 6 (MYF6) (Homo sapiens (Human)).